The primary structure comprises 129 residues: Follitropin subunit beta (129 aa).

A signal peptide spans 1 to 20 (MKSVQFCFLFCCWRAICCRS). 6 disulfide bridges follow: C21-C69, C35-C84, C38-C122, C46-C100, C50-C102, and C105-C112. 2 N-linked (GlcNAc...) asparagine glycosylation sites follow: N25 and N42.

It belongs to the glycoprotein hormones subunit beta family. Heterodimer. The active follitropin is a heterodimer composed of an alpha chain/CGA shared with other hormones and a unique beta chain/FSHB shown here.

The protein localises to the secreted. Its function is as follows. Together with the alpha chain CGA constitutes follitropin, the follicle-stimulating hormone, and provides its biological specificity to the hormone heterodimer. Binds FSHR, a G protein-coupled receptor, on target cells to activate downstream signaling pathways. Follitropin is involved in follicle development and spermatogenesis in reproductive organs. The polypeptide is Follitropin subunit beta (FSHB) (Bubalus bubalis (Domestic water buffalo)).